We begin with the raw amino-acid sequence, 396 residues long: Elongation factor Tu (396 aa).

The tr-type G domain occupies 10–205; the sequence is KPHVNIGTIG…AVDESIPAPV (196 aa). The interval 19 to 26 is G1; sequence GHVDHGKT. 19 to 26 provides a ligand contact to GTP; that stretch reads GHVDHGKT. T26 is a Mg(2+) binding site. A G2 region spans residues 62-66; sequence GITIN. Residues 83–86 form a G3 region; that stretch reads DAPG. GTP-binding positions include 83–87 and 138–141; these read DAPGH and NKSD. Residues 138–141 are G4; that stretch reads NKSD. The interval 175–177 is G5; the sequence is SAL.

This sequence belongs to the TRAFAC class translation factor GTPase superfamily. Classic translation factor GTPase family. EF-Tu/EF-1A subfamily. In terms of assembly, monomer.

The protein localises to the cytoplasm. It carries out the reaction GTP + H2O = GDP + phosphate + H(+). Its function is as follows. GTP hydrolase that promotes the GTP-dependent binding of aminoacyl-tRNA to the A-site of ribosomes during protein biosynthesis. The sequence is that of Elongation factor Tu from Mycobacterium leprae (strain Br4923).